The primary structure comprises 597 residues: Elongation factor 4 (597 aa).

The region spanning 2–184 (KNIRNFSIIA…RLVRDIPAPE (183 aa)) is the tr-type G domain. GTP-binding positions include 14-19 (DHGKST) and 131-134 (NKID).

The protein belongs to the TRAFAC class translation factor GTPase superfamily. Classic translation factor GTPase family. LepA subfamily.

Its subcellular location is the cell inner membrane. The enzyme catalyses GTP + H2O = GDP + phosphate + H(+). In terms of biological role, required for accurate and efficient protein synthesis under certain stress conditions. May act as a fidelity factor of the translation reaction, by catalyzing a one-codon backward translocation of tRNAs on improperly translocated ribosomes. Back-translocation proceeds from a post-translocation (POST) complex to a pre-translocation (PRE) complex, thus giving elongation factor G a second chance to translocate the tRNAs correctly. Binds to ribosomes in a GTP-dependent manner. The chain is Elongation factor 4 from Edwardsiella ictaluri (strain 93-146).